We begin with the raw amino-acid sequence, 139 residues long: HTH-type transcriptional regulator MntR (139 aa).

In terms of domain architecture, HTH dtxR-type spans 1 to 63; it reads MPTPSMEDHI…YEKYRGLTLT (63 aa). Mn(2+) is bound by residues D8, E11, H77, E99, E102, and H103.

This sequence belongs to the DtxR/MntR family. As to quaternary structure, homodimer.

The protein localises to the cytoplasm. With respect to regulation, DNA binding is strongly activated by Mn(2+). Its function is as follows. Central regulator of manganese homeostasis. The sequence is that of HTH-type transcriptional regulator MntR from Lysinibacillus sphaericus (strain C3-41).